We begin with the raw amino-acid sequence, 636 residues long: Asparagine synthetase domain-containing protein 1 (636 aa).

The active-site Nucleophile is the Cys-2. Positions 2–187 (CGICCVVALS…ASGIFKMDLR (186 aa)) constitute a Glutamine amidotransferase type-2 domain. The region spanning 291-607 (QFIDVLDEAV…GLEAASILPK (317 aa)) is the Asparagine synthetase domain.

The sequence is that of Asparagine synthetase domain-containing protein 1 (ASNSD1) from Gallus gallus (Chicken).